Reading from the N-terminus, the 1393-residue chain is MAERANLVFHNKVIDGTAIKRLISRLIDHFGMAYTSHILDQVKALGFQQATATSISLGIDDLLTIPSKGWLVQDAEQQSLILEKHHHFGNVHAVEKLRQSIEIWYATSEYLRQEMNPNFRMTDPFNPVHIMSFSGARGNASQVHQLVGMRGLMSDPQGQMIDLPIQSNLREGLSLTEYIISCYGARKGVVDTAVRTSDAGYLTRRLVEVVQHIVVRRTDCGTTRGISVSPQKRTLPERIFIQTLIGRVLADDIYMGPRCIAIRNQDIGLGLVDRFRAFRTQPISIRTPFTCRSTSWICRLCYGRSPTHGDLVELGEAVGIIAGQSIGEPGTQLTLRTFHTGGVFTGGTAEHVRAPFNGKIKFNEDLVHPTRTRHGHPAFLCYRDLYVIIESEDIIHKVAIPPKSFLLVQNDQYVESEQVIAEIRAGTYTLNLKERVRKHIYSDSEGEMHWSTDVYHSPEFTYSNVHLLPKTSHLWILSGGSYKFSVVPFSLHKDQDQISIHYLSAERRYISRFSVNNDQVRHNLFSSDFSDKKEERIYDYSELNRIIGTGHCDFIYSAILHENADLLAKRRRNRFIIPFQLIQDQEKELMLHSHSGISMEIPINGIFRRKSILAFFDDPRYRRKSSGITKYGTLGAHSIVKREDVIEYRGVKKVKPKYQMKVDRFFFIPEEVHILSESSSIMVRNNSIIGVDTPITLNTRSQVGGLVRVERKKKRIELKIFSGNIYFPGERDKISRHSGILIPPGTGKTNSKESKKLKNWIYVQRITPTKKKYFVLVRPVTPYEIPDGLNLATLFPQDPFQEKDNMQLRAVNYILYGNGKPTRRISDTSIQLVRTCLVLSWDQDNKSSFAEEVCASFVEVRTNGLIRDFLRIDLVKSHIFYIRKRNDPSGSELISDNRSDRTNKNPFYSIYSNARIQQSFSQNHGTIHTLLNRNKESQSLIILSASNCFRMGPFNDVKYHNVIKQSIKKDPLIPIKNLLGPLGTAPKIANFYSSFYPLITHNQTSVAKYFELDNLKQAFQVLNYYLIAENGRIYNFDPCRNIFLNAVNLNWYFPHHHYHHNYCEETSTIISLGQFICENVCIAKSGPRLKSGQVFIVQADSIVIRSAKPYLATPGATVHGHYGETLYEGDTLVTFIYEKSRSGDITQGLPKVEQVLEVRSIDSISMNLEKRIEGWNECITRILGIPWGFVIGAELTIVQSRLSLVNKIQKVYRSQGVQIHNRHIEIIVRQITSKVLVSEDGMSNVFLPGELIGLLRAERTGRALEEAICYRAVLLGITRASLNTQSFISEASFQETARVLAKAALRGRIDWLKGLKENVVLGGMIPAGTGFKGLVHRSRQHNNILLETKKKNFFGGEMRDIFFHHRELFDSCISNNLHDTSGRSFIGIEFNDS.

Residues cysteine 220, cysteine 291, cysteine 298, and cysteine 301 each contribute to the Zn(2+) site.

This sequence belongs to the RNA polymerase beta' chain family. RpoC2 subfamily. As to quaternary structure, in plastids the minimal PEP RNA polymerase catalytic core is composed of four subunits: alpha, beta, beta', and beta''. When a (nuclear-encoded) sigma factor is associated with the core the holoenzyme is formed, which can initiate transcription. Zn(2+) is required as a cofactor.

It localises to the plastid. Its subcellular location is the chloroplast. It carries out the reaction RNA(n) + a ribonucleoside 5'-triphosphate = RNA(n+1) + diphosphate. Its function is as follows. DNA-dependent RNA polymerase catalyzes the transcription of DNA into RNA using the four ribonucleoside triphosphates as substrates. This is DNA-directed RNA polymerase subunit beta'' from Gossypium hirsutum (Upland cotton).